Consider the following 93-residue polypeptide: Alpha-defensin 21 (93 aa).

An N-terminal signal peptide occupies residues 1-19 (MKTLVLLSALILLAYQVQT). A propeptide spanning residues 20–58 (DPIQNTDEETNTEEQPGEDDQAVSVSFGGQEGSALHEKL) is cleaved from the precursor. Positions 22 to 43 (IQNTDEETNTEEQPGEDDQAVS) are disordered. The segment covering 25–40 (TDEETNTEEQPGEDDQ) has biased composition (acidic residues). Intrachain disulfides connect Cys-64/Cys-89, Cys-66/Cys-81, and Cys-71/Cys-88.

Belongs to the alpha-defensin family.

The protein resides in the secreted. May have microbicidal activities. This Mus musculus (Mouse) protein is Alpha-defensin 21 (Defa21).